Here is a 172-residue protein sequence, read N- to C-terminus: MPDNVLIHAIKADITSLTVDAIVNAANTSLLGGGGVDGAIHRAAGPKLLEACRELGGCLTGEAKITKGYRLPATFVIHTVGPVWHGGNHGEAELLASCYRNSLKLAIEHHCRTIAFPSISTGIYGYPVEQAAAIAITTVREMLADERGIEKVIFCCFSDRDLDVYQKALAAG.

Residues 1 to 172 (MPDNVLIHAI…DVYQKALAAG (172 aa)) form the Macro domain.

This sequence belongs to the MacroD-type family.

In Chlorobaculum tepidum (strain ATCC 49652 / DSM 12025 / NBRC 103806 / TLS) (Chlorobium tepidum), this protein is Macro domain-containing protein CT2219.